Here is an 829-residue protein sequence, read N- to C-terminus: Periplasmic nitrate reductase (829 aa).

Positions 1–30 form a signal peptide, tat-type signal; the sequence is MKMTRRAFVKANAAASAAAVAGITLPASAA. The 4Fe-4S Mo/W bis-MGD-type domain maps to 41-97; that stretch reads ITWDKAPCRFCGTGCSVLVGTQNGKVVATQGDPEAPVNKGLNCIKGYFLSKIMYGQD. [4Fe-4S] cluster-binding residues include C48, C51, C55, and C83. Mo-bis(molybdopterin guanine dinucleotide) contacts are provided by residues K85, Q152, N177, C181, 214 to 221, 245 to 249, 264 to 266, M374, Q378, N484, 510 to 511, K533, D560, and 718 to 727; these read WGSNMAEM, STYYH, QSD, SD, and TGRVLEHWHT. Residue F794 coordinates substrate. Positions 802 and 819 each coordinate Mo-bis(molybdopterin guanine dinucleotide).

This sequence belongs to the prokaryotic molybdopterin-containing oxidoreductase family. NasA/NapA/NarB subfamily. As to quaternary structure, component of the periplasmic nitrate reductase NapAB complex composed of NapA and NapB. It depends on [4Fe-4S] cluster as a cofactor. Mo-bis(molybdopterin guanine dinucleotide) is required as a cofactor. In terms of processing, predicted to be exported by the Tat system. The position of the signal peptide cleavage has not been experimentally proven.

It is found in the periplasm. It catalyses the reaction 2 Fe(II)-[cytochrome] + nitrate + 2 H(+) = 2 Fe(III)-[cytochrome] + nitrite + H2O. Catalytic subunit of the periplasmic nitrate reductase complex NapAB. Receives electrons from NapB and catalyzes the reduction of nitrate to nitrite. The polypeptide is Periplasmic nitrate reductase (Vibrio vulnificus (strain CMCP6)).